The following is a 92-amino-acid chain: Small ribosomal subunit protein uS19 (92 aa).

This sequence belongs to the universal ribosomal protein uS19 family.

Its function is as follows. Protein S19 forms a complex with S13 that binds strongly to the 16S ribosomal RNA. The protein is Small ribosomal subunit protein uS19 of Dinoroseobacter shibae (strain DSM 16493 / NCIMB 14021 / DFL 12).